We begin with the raw amino-acid sequence, 349 residues long: Anaerobic nitrite reductase Glb1-3 (349 aa).

Globin domains lie at 13–162 (GFTE…AEMK) and 184–333 (CFTE…AEMK). Residues Ser56, Lys70, His74, Lys104, Thr108, His109, Ser227, Lys241, His245, Lys275, Thr279, and His280 each contribute to the heme b site.

Belongs to the plant globin family. Monomer. Heme b serves as cofactor.

It is found in the cytoplasm. The protein localises to the nucleus. The catalysed reaction is Fe(III)-heme b-[protein] + nitric oxide + H2O = Fe(II)-heme b-[protein] + nitrite + 2 H(+). Functionally, phytoglobin that regulates the fine tuning of nitric oxide (NO) concentration in the cytosol in response to sudden changes in O(2) availability, and performs both symbiotic and nonsymbiotic functions. Exhibits NO dioxygenase activity in the presence of O(2) but nitrite reductase (NiR) activity in the absence of O(2) (e.g. during flooding or in waterlogged soil). May not function as an oxygen storage or transport protein. Extremely reactive toward the physiological ligands O(2), nitric oxide (NO), and nitrite with a very high affinity for O(2) through an hexacoordinate heme iron because of a very low dissociation constant. The sequence is that of Anaerobic nitrite reductase Glb1-3 from Medicago truncatula (Barrel medic).